The primary structure comprises 603 residues: Mitochondrial distribution and morphology protein 34 (603 aa).

Residues methionine 1–glutamate 205 enclose the SMP-LTD domain. A compositionally biased stretch (low complexity) spans lysine 320–glycine 332. Disordered regions lie at residues lysine 320–arginine 511 and isoleucine 558–alanine 603. A compositionally biased stretch (polar residues) spans asparagine 333–glycine 351. Residues valine 371 to alanine 380 show a composition bias toward basic and acidic residues. Residues glycine 383–valine 403 show a composition bias toward polar residues. Positions proline 452–alanine 463 are enriched in low complexity. Residues arginine 500 to leucine 509 show a composition bias toward polar residues. Residues isoleucine 558 to serine 570 are compositionally biased toward basic and acidic residues.

This sequence belongs to the MDM34 family. Component of the ER-mitochondria encounter structure (ERMES) or MDM complex, composed of mmm1, mdm10, mdm12 and mdm34.

It localises to the mitochondrion outer membrane. Functionally, component of the ERMES/MDM complex, which serves as a molecular tether to connect the endoplasmic reticulum (ER) and mitochondria. Components of this complex are involved in the control of mitochondrial shape and protein biogenesis, and function in nonvesicular lipid trafficking between the ER and mitochondria. Mdm34 is required for the interaction of the ER-resident membrane protein mmm1 and the outer mitochondrial membrane-resident beta-barrel protein mdm10. The chain is Mitochondrial distribution and morphology protein 34 from Pyrenophora tritici-repentis (strain Pt-1C-BFP) (Wheat tan spot fungus).